The sequence spans 603 residues: MKENLTNLFEKVIKLPTTSGCYKMLNENKKILYIGKAKNLRSRVKSYFLEKNSHKIKILMKNVKSIEVITTNSEYEALLLECNLIKTHKPDYNVKLKDGKGYPMVRITHEKYPRIFKTRKIINDKSEYFGPFTNVKKLDQVLDFINKTFKIRKCKKKSNAPCLYYHMGQCLGVCYKENLEKEYQKELDKAKSILNGNISEISSQIDIKLKHAIQKEDFETAIKLKEIRNSLIEINQIQIVTKTNNLNIDYVHVHPGENVNTIIVLKYRNGKLVERDANFDESICKENELILQFLIQYYTSINMIVPDKIHIFLKDIDTKNVEKLINEIKNTKTEIIYKETEEILKIMEMAISNAELSLREYENKSTKALESLKIVLEMDKLPKIIEGFDIAHLKGQETVASMVTFKMGMPFKENYRLYKLNSLLKGEIDDFKAIKEVISRRYSEIINNNLELPNLILIDGGKGQLNAALSILKGLKIENKVKVCSLAKKQETIFLTTNKKGINLPQGHPALRILQNVRDEAHRKANGFNKKRREKITLLYTKIHGIGEKTAQKILKSIGTYKDILPLSENEISEKIKVNVQLAKRIKEFAIKENSIKNNNQDK.

Positions 17–94 constitute a GIY-YIG domain; that stretch reads TTSGCYKMLN…IKTHKPDYNV (78 aa).

Belongs to the UvrC family. As to quaternary structure, interacts with UvrB in an incision complex.

It localises to the cytoplasm. Its function is as follows. The UvrABC repair system catalyzes the recognition and processing of DNA lesions. UvrC both incises the 5' and 3' sides of the lesion. The N-terminal half is responsible for the 3' incision and the C-terminal half is responsible for the 5' incision. The polypeptide is UvrABC system protein C (Borreliella burgdorferi (strain ATCC 35210 / DSM 4680 / CIP 102532 / B31) (Borrelia burgdorferi)).